Here is a 184-residue protein sequence, read N- to C-terminus: Mediator of RNA polymerase II transcription subunit 30 (184 aa).

Residues 136–179 adopt a coiled-coil conformation; the sequence is SQLRFASEEKREILEVNKKLKQKNQQLKQIMDQLRNLIWDINSM.

This sequence belongs to the Mediator complex subunit 30 family. Component of the Mediator complex.

It localises to the nucleus. Functionally, component of the Mediator complex, a coactivator involved in the regulated transcription of nearly all RNA polymerase II-dependent genes. Mediator functions as a bridge to convey information from gene-specific regulatory proteins to the basal RNA polymerase II transcription machinery. Mediator is recruited to promoters by direct interactions with regulatory proteins and serves as a scaffold for the assembly of a functional preinitiation complex with RNA polymerase II and the general transcription factors. This is Mediator of RNA polymerase II transcription subunit 30 (med30) from Xenopus laevis (African clawed frog).